Here is an 88-residue protein sequence, read N- to C-terminus: Small ribosomal subunit protein uS17 (88 aa).

Belongs to the universal ribosomal protein uS17 family. In terms of assembly, part of the 30S ribosomal subunit.

In terms of biological role, one of the primary rRNA binding proteins, it binds specifically to the 5'-end of 16S ribosomal RNA. This is Small ribosomal subunit protein uS17 from Lactobacillus delbrueckii subsp. bulgaricus (strain ATCC 11842 / DSM 20081 / BCRC 10696 / JCM 1002 / NBRC 13953 / NCIMB 11778 / NCTC 12712 / WDCM 00102 / Lb 14).